We begin with the raw amino-acid sequence, 197 residues long: Holliday junction resolvase RecU (197 aa).

Mg(2+)-binding residues include threonine 82, aspartate 84, glutamate 97, and glutamine 116.

Belongs to the RecU family. The cofactor is Mg(2+).

Its subcellular location is the cytoplasm. The catalysed reaction is Endonucleolytic cleavage at a junction such as a reciprocal single-stranded crossover between two homologous DNA duplexes (Holliday junction).. Functionally, endonuclease that resolves Holliday junction intermediates in genetic recombination. Cleaves mobile four-strand junctions by introducing symmetrical nicks in paired strands. Promotes annealing of linear ssDNA with homologous dsDNA. Required for DNA repair, homologous recombination and chromosome segregation. The sequence is that of Holliday junction resolvase RecU from Streptococcus mutans serotype c (strain ATCC 700610 / UA159).